We begin with the raw amino-acid sequence, 168 residues long: MSAVDPIADMFSAIKNAIMRRDDFLYVPSSKLKERILDVLKKEGFIQDWEALKGEKYEEEYKKMKELAEKSPNPKMKRYLKQLEEYNKGTQYPIKIYLKYLDPKKRKSAITNIVKVSKGGRRVYAGVRTMPYVKRGLGIAIVSTDAGVMTDHEARRMRKGGEVIAFVW.

The segment at 59–93 is not found in other S8 sequences; sequence EEYKKMKELAEKSPNPKMKRYLKQLEEYNKGTQYP.

The protein belongs to the universal ribosomal protein uS8 family. Part of the 30S ribosomal subunit. Contacts proteins S5 and S12.

In terms of biological role, one of the primary rRNA binding proteins, it binds directly to 16S rRNA central domain where it helps coordinate assembly of the platform of the 30S subunit. In Aquifex aeolicus (strain VF5), this protein is Small ribosomal subunit protein uS8.